The chain runs to 293 residues: Lysosomal amino acid transporter 1 homolog (293 aa).

Over 1–37 (MVWRTLVASNFSTCPNGSIQWIWDVFGECAQDGWDEA) the chain is Lumenal. The N-linked (GlcNAc...) asparagine glycan is linked to asparagine 10. The PQ-loop 1 domain occupies 34 to 100 (WDEASVALGL…LADQLPLQTY (67 aa)). A helical transmembrane segment spans residues 38–58 (SVALGLVSIFCFAASTFPQYI). Residues 59-71 (KACKTGNMDQALS) lie on the Cytoplasmic side of the membrane. A helical transmembrane segment spans residues 72 to 92 (LWFLLGWIGGDSCNLIGSFLA). Residues 93-96 (DQLP) lie on the Lumenal side of the membrane. Residues 97–117 (LQTYTAVYYVLADLLMLTLYF) form a helical membrane-spanning segment. Residues 118-126 (HYKFKKQPS) are Cytoplasmic-facing. Residues 127–147 (LLSAPINSVLLFILGTVCITP) form a helical membrane-spanning segment. The Lumenal portion of the chain corresponds to 148–182 (LLSSTDPVAVPREGFRGRTLLSVEPGNKPFTKKEV). A helical membrane pass occupies residues 183 to 203 (VGFVIGSASSVLYLLSRLPQI). The PQ-loop 2 domain occupies 191 to 243 (SSVLYLLSRLPQIRTNFVRQSTQGISYSLFALVMLGNTLYGLSVLLKNPEVGQ). At 204-214 (RTNFVRQSTQG) the chain is on the cytoplasmic side. A helical membrane pass occupies residues 215-235 (ISYSLFALVMLGNTLYGLSVL). Residues 236–254 (LKNPEVGQSEGSYLLHHLP) are Lumenal-facing. Residues 255-275 (WLVGSLGVLLLDTIISIQFLV) form a helical membrane-spanning segment. Over 276 to 293 (YRSHDADAASEREPLLPS) the chain is Cytoplasmic. Residues 290–291 (LL) carry the Di-leucine motif motif.

The protein belongs to the laat-1 family.

It is found in the lysosome membrane. In terms of biological role, amino acid transporter that specifically mediates the pH-dependent export of the cationic amino acids arginine, histidine and lysine from lysosomes. The sequence is that of Lysosomal amino acid transporter 1 homolog (Slc66a1) from Rattus norvegicus (Rat).